Consider the following 575-residue polypeptide: Muellerian-inhibiting factor (575 aa).

The N-terminal stretch at 1-24 (MPGPSLSLALVLSAMGALLRPGTP) is a signal peptide. Residues 25 to 466 (REEVFSTSAL…ERSGSARAQR (442 aa)) constitute a propeptide that is removed on maturation. N-linked (GlcNAc...) asparagine glycans are attached at residues N78 and N344. Cystine bridges form between C477/C541, C503/C572, and C507/C574.

This sequence belongs to the TGF-beta family. In terms of assembly, homodimer; disulfide-linked. In terms of processing, preproprotein is proteolytically processed to generate N- and C-terminal cleavage products that homodimerize and associate to form a biologically active non-covalent complex. Binding of the non-covalent complex to AMHR2 induces dissociation of the pro-region from the mature C-terminal dimer. The N-terminal portion of the protein, despite having no intrinsic activity, has the role of amplifying the activity of the C-terminus. Expressed in fetal testis and adult ovaries.

It localises to the secreted. Its function is as follows. Plays an important role in several reproductive functions. Induces Muellerian duct regression during male fetal sexual differentiation and plays a role in Leydig cell differentiation and function. In female acts as a negative regulator of the primordial to primary follicle transition and decreases FSH sensitivity of growing follicles. AMH signals by binding to a specific type-II receptor, AMHR2, that heterodimerizes with type-I receptors (ACVR1 and BMPR1A), and recruiting SMAD proteins that are translocated to the nucleus to regulate target gene expression. The polypeptide is Muellerian-inhibiting factor (AMH) (Bos taurus (Bovine)).